We begin with the raw amino-acid sequence, 239 residues long: Orotidine 5'-phosphate decarboxylase (239 aa).

Substrate is bound by residues D15, K37, 64-73 (DLKFHDIPNT), T126, R187, Q196, G216, and R217. Catalysis depends on K66, which acts as the Proton donor.

Belongs to the OMP decarboxylase family. Type 1 subfamily. Homodimer.

The enzyme catalyses orotidine 5'-phosphate + H(+) = UMP + CO2. It participates in pyrimidine metabolism; UMP biosynthesis via de novo pathway; UMP from orotate: step 2/2. Catalyzes the decarboxylation of orotidine 5'-monophosphate (OMP) to uridine 5'-monophosphate (UMP). The sequence is that of Orotidine 5'-phosphate decarboxylase from Geobacter sulfurreducens (strain ATCC 51573 / DSM 12127 / PCA).